Consider the following 331-residue polypeptide: MEFYASLKSIAMHVPSERVKNAEFQQFLDTSDEWIEKRTGIKERRFANDEEKSSDLGVIAAKQAIERAHLTPQDIDLVVVATLSPDFLAMPSTACVLSAKLGIENKPAFDISAACTGFIYLLSVAKAYVESGMYENVLIVGAEKTSSVLDFKDRGTCILFGDGAGACVIGRTKRLKESVLDVQISANGNFSNYLYTPRTLKPTPFNAKEEALEPFLRMKGNEVFKLAVKTLLKDVETILEKNALKPEDVRLFIPHQANFRIIQAVREHLDFKDEQVVLTVHKYGNTSAASIPMAMCEAYEEGRLKKGDLMLLDAFGGGLTWGSALVYFGGI.

Residues cysteine 115 and histidine 255 contribute to the active site. Residues glutamine 256–arginine 260 form an ACP-binding region. Residue asparagine 285 is part of the active site.

Belongs to the thiolase-like superfamily. FabH family. In terms of assembly, homodimer.

It is found in the cytoplasm. The enzyme catalyses malonyl-[ACP] + acetyl-CoA + H(+) = 3-oxobutanoyl-[ACP] + CO2 + CoA. Its pathway is lipid metabolism; fatty acid biosynthesis. In terms of biological role, catalyzes the condensation reaction of fatty acid synthesis by the addition to an acyl acceptor of two carbons from malonyl-ACP. Catalyzes the first condensation reaction which initiates fatty acid synthesis and may therefore play a role in governing the total rate of fatty acid production. Possesses both acetoacetyl-ACP synthase and acetyl transacylase activities. Its substrate specificity determines the biosynthesis of branched-chain and/or straight-chain of fatty acids. This Helicobacter pylori (strain J99 / ATCC 700824) (Campylobacter pylori J99) protein is Beta-ketoacyl-[acyl-carrier-protein] synthase III.